Consider the following 460-residue polypeptide: Probable amino acid transporter skat-1 (460 aa).

10 helical membrane-spanning segments follow: residues 64–84 (LGGLWVSFVMSFVIAGLNWYG), 132–152 (FVNVTILFYQLGMCSVAILFI), 172–192 (MILMATVSLFFILLTNMFTEM), 194–214 (IVSFFALVSSVFFVIGAAVIM), 236–256 (TITMIGMSMYAFEGQTMILPI), 270–290 (FGVLSTTMIICTAFMTALGFF), 316–336 (VNVFLMLQSLLGNSIAMYVVY), 362–382 (GFRVFWVLVTYLMAVLIPKLE), 383–403 (IMIPLVGVTSGALCALIFPPF), and 426–446 (IFINLVVMAIGVFAIIAGVYT).

Belongs to the amino acid/polyamine transporter 2 family. In terms of tissue distribution, expressed in the head, tail, body and ventral nerve cord neurons, muscles of the vulva, and intestine.

It is found in the membrane. Its subcellular location is the cytoplasmic granule. In terms of biological role, plays a role in the accumulation of vital dyes and endogenous fluorescent compounds in lysosome related organelles. Has an effect on lysosome related organelle (LRO) function, in a pathway with serotonin. The sequence is that of Probable amino acid transporter skat-1 from Caenorhabditis elegans.